Reading from the N-terminus, the 208-residue chain is uncharacterized protein (208 aa).

The disordered stretch occupies residues 124–208 (KKTGSSNART…PSFGKYSSLA (85 aa)). Residues 133–170 (TPDEGKKAKNAPEEEKVKTSGSEDAKGEESAVEGKEPE) are compositionally biased toward basic and acidic residues.

It localises to the golgi apparatus. This is an uncharacterized protein from Encephalitozoon cuniculi (strain GB-M1) (Microsporidian parasite).